The primary structure comprises 379 residues: Flagellin A (379 aa).

2 coiled-coil regions span residues 104 to 129 and 314 to 341; these read NSASERQALNEESVALQDELNRIAET and QNRLSHSISNLSNIQENVEASKSRIKDT.

Belongs to the bacterial flagellin family. Heteromer of multiple flagellin subunits including FlaA, FlaB, FlaC, FlaD and FlaE.

It is found in the secreted. The protein localises to the bacterial flagellum. Flagellin is the subunit protein which polymerizes to form the filaments of bacterial flagella. FlaA is required to form a core or scaffold into which the other flagellins are inserted to provide structural integrity. Essential for flagellar synthesis and motility; important for full virulence. The chain is Flagellin A (flaA) from Vibrio cholerae serotype O1 (strain ATCC 39541 / Classical Ogawa 395 / O395).